The sequence spans 246 residues: Endonuclease V (246 aa).

Mg(2+) contacts are provided by D50 and D120.

It belongs to the endonuclease V family. It depends on Mg(2+) as a cofactor.

The protein resides in the cytoplasm. The enzyme catalyses Endonucleolytic cleavage at apurinic or apyrimidinic sites to products with a 5'-phosphate.. Functionally, DNA repair enzyme involved in the repair of deaminated bases. Selectively cleaves double-stranded DNA at the second phosphodiester bond 3' to a deoxyinosine leaving behind the intact lesion on the nicked DNA. This Gloeobacter violaceus (strain ATCC 29082 / PCC 7421) protein is Endonuclease V.